The following is a 757-amino-acid chain: Chloride anion exchanger (757 aa).

The Cytoplasmic segment spans residues 1–71 (MIEAIGNQYV…SWLPAYKIKE (71 aa)). A helical membrane pass occupies residues 72-92 (WLLSDIVSGISTGLVAVLQGL). Alanine 93 is a topological domain (extracellular). A helical transmembrane segment spans residues 94-114 (FALLVNIPPAYGLYAAFFPVI). At 115–124 (TYFFLGTSRH) the chain is on the cytoplasmic side. The helical transmembrane segment at 125-145 (ISVGPFPVLSMMVGVVVTRVA) threads the bilayer. Topologically, residues 146 to 176 (SGSDTSPALSSSSAENDSMIEEKVMVAASVT) are extracellular. Asparagine 161 carries N-linked (GlcNAc...) asparagine glycosylation. The chain crosses the membrane as a helical span at residues 177-197 (VLSGIIQLLLGVLQIGFVVIY). At 198–201 (LSES) the chain is on the cytoplasmic side. Residues 202–222 (LISGFTTAAAIHVLVSQLKFM) form a helical membrane-spanning segment. The Extracellular portion of the chain corresponds to 223–250 (LQLTVPAHSDPFSIFKVLESVFSQIQKT). Residues 251-271 (NIADLVTSVIILVVVFVVKEI) traverse the membrane as a helical segment. The Cytoplasmic portion of the chain corresponds to 272-278 (NQRYRSK). A helical membrane pass occupies residues 279 to 299 (LPVPIPIELIMTVIATGISYG). The Extracellular segment spans residues 300-335 (CNFEQRFGVAVVGNMSLGFQPPITPSVEVFQDTIGD). The helical transmembrane segment at 336–356 (CFGIAIVGFAVAFSVASVYSL) threads the bilayer. The Cytoplasmic portion of the chain corresponds to 357 to 367 (KYDYPIDGNQE). Residues 368–388 (LIALGVSNIFTGAFKGFAGST) form a helical membrane-spanning segment. Topologically, residues 389 to 404 (ALSRSGVQESTGGKTQ) are extracellular. Residues 405-425 (VAGLLSAVIVLIVIVAIGFLL) traverse the membrane as a helical segment. Topologically, residues 426-462 (QPLQKSVLAALALGNLKGMLMQFAEIGRLWKKDKYDC) are cytoplasmic. A helical transmembrane segment spans residues 463 to 483 (LIWIMTFIFAIVLGLGLGLAA). The Extracellular segment spans residues 484 to 757 (SVAFQLLTIV…ECQVPVETKF (274 aa)). An STAS domain is found at 518–713 (NYADVYEPEG…LTIHDAILHI (196 aa)). The short motif at 754–757 (ETKF) is the PDZ-binding element.

It belongs to the SLC26A/SulP transporter (TC 2.A.53) family. Interacts with PDZK1, CFTR, SLC26A6 and NHERF1. Interacts (via PDZ-binding motif) with NHERF4 (via the third PDZ domain); interaction leads to decreased expression of SLC26A3 on the cell membrane resulting in its reduced exchanger activity. Post-translationally, N-glycosylation is required for efficient cell surface expression, and protection from proteolytic degradation.

The protein localises to the apical cell membrane. The protein resides in the membrane. Its subcellular location is the cell membrane. It carries out the reaction hydrogencarbonate(in) + 2 chloride(out) = hydrogencarbonate(out) + 2 chloride(in). Functionally, mediates chloride-bicarbonate exchange with a chloride bicarbonate stoichiometry of 2:1 in the intestinal epithelia. Plays a role in the chloride and bicarbonate homeostasis during sperm epididymal maturation and capacitation. This Rattus norvegicus (Rat) protein is Chloride anion exchanger (Slc26a3).